The chain runs to 307 residues: Tyrosine recombinase XerC (307 aa).

The Core-binding (CB) domain occupies 6–89; that stretch reads HNTLQTVNTF…TLRTFFRYLM (84 aa). One can recognise a Tyr recombinase domain in the interval 110 to 293; that stretch reads RLPKALDVDQ…DFQHLAQVYD (184 aa). Residues Arg-151, Lys-175, His-245, Arg-248, and His-271 contribute to the active site. Tyr-280 serves as the catalytic O-(3'-phospho-DNA)-tyrosine intermediate.

It belongs to the 'phage' integrase family. XerC subfamily. As to quaternary structure, forms a cyclic heterotetrameric complex composed of two molecules of XerC and two molecules of XerD.

The protein localises to the cytoplasm. Site-specific tyrosine recombinase, which acts by catalyzing the cutting and rejoining of the recombining DNA molecules. The XerC-XerD complex is essential to convert dimers of the bacterial chromosome into monomers to permit their segregation at cell division. It also contributes to the segregational stability of plasmids. This is Tyrosine recombinase XerC from Alcanivorax borkumensis (strain ATCC 700651 / DSM 11573 / NCIMB 13689 / SK2).